A 629-amino-acid chain; its full sequence is Polyadenylate-binding protein, cytoplasmic and nuclear (629 aa).

Positions 1–11 are enriched in polar residues; the sequence is MSAAETNQLQE. The interval 1-48 is disordered; that stretch reads MSAAETNQLQESMEKLNIGSTTEEQSAAAATTTADQSAEEQGESSGVA. The span at 20 to 36 shows a compositional bias: low complexity; the sequence is STTEEQSAAAATTTADQ. RRM domains follow at residues 52-130, 140-217, 233-310, and 336-413; these read ASLY…WSQR, GNIF…KHIS, TNIY…RAQK, and VNLF…LAQR. The segment at 503-534 is disordered; sequence PPQFQQDFNGQNMRPQQQQQQQPRGGYYPNRN. Over residues 505–517 the composition is skewed to polar residues; it reads QFQQDFNGQNMRP. The region spanning 537–618 is the PABC domain; the sequence is SKRDLAAIIS…ALTAFEEYKK (82 aa).

This sequence belongs to the polyadenylate-binding protein type-1 family.

It is found in the cytoplasm. It localises to the nucleus. Binds the poly(A) tail of mRNA. Appears to be an important mediator of the multiple roles of the poly(A) tail in mRNA biogenesis, stability and translation. In the nucleus, involved in both mRNA cleavage and polyadenylation. Is also required for efficient mRNA export to the cytoplasm. Acts in concert with a poly(A)-specific nuclease (PAN) to affect poly(A) tail shortening, which may occur concomitantly with either nucleocytoplasmic mRNA transport or translational initiation. In the cytoplasm, stimulates translation initiation and regulates mRNA decay through translation termination-coupled poly(A) shortening, probably mediated by PAN. The sequence is that of Polyadenylate-binding protein, cytoplasmic and nuclear (PAB1) from Candida albicans (strain SC5314 / ATCC MYA-2876) (Yeast).